We begin with the raw amino-acid sequence, 268 residues long: DNA repair protein RecO (268 aa).

This sequence belongs to the RecO family.

Functionally, involved in DNA repair and RecF pathway recombination. This Parasynechococcus marenigrum (strain WH8102) protein is DNA repair protein RecO.